The chain runs to 288 residues: Homoserine kinase (288 aa).

79–89 (PPARGLGSSSA) lines the ATP pocket.

This sequence belongs to the GHMP kinase family. Homoserine kinase subfamily.

It localises to the cytoplasm. It carries out the reaction L-homoserine + ATP = O-phospho-L-homoserine + ADP + H(+). The protein operates within amino-acid biosynthesis; L-threonine biosynthesis; L-threonine from L-aspartate: step 4/5. Its function is as follows. Catalyzes the ATP-dependent phosphorylation of L-homoserine to L-homoserine phosphate. The chain is Homoserine kinase from Listeria monocytogenes serotype 4a (strain HCC23).